The chain runs to 306 residues: Agmatinase (306 aa).

Residues H126, D149, H151, D153, D230, and D232 each coordinate Mn(2+).

The protein belongs to the arginase family. Agmatinase subfamily. It depends on Mn(2+) as a cofactor.

It carries out the reaction agmatine + H2O = urea + putrescine. It functions in the pathway amine and polyamine biosynthesis; putrescine biosynthesis via agmatine pathway; putrescine from agmatine: step 1/1. In terms of biological role, catalyzes the formation of putrescine from agmatine. This chain is Agmatinase, found in Salmonella agona (strain SL483).